The following is a 239-amino-acid chain: 6-phosphogluconolactonase (239 aa).

This sequence belongs to the glucosamine/galactosamine-6-phosphate isomerase family. 6-phosphogluconolactonase subfamily.

The catalysed reaction is 6-phospho-D-glucono-1,5-lactone + H2O = 6-phospho-D-gluconate + H(+). It participates in carbohydrate degradation; pentose phosphate pathway; D-ribulose 5-phosphate from D-glucose 6-phosphate (oxidative stage): step 2/3. Its function is as follows. Hydrolysis of 6-phosphogluconolactone to 6-phosphogluconate. This is 6-phosphogluconolactonase (pgl) from Xylella fastidiosa (strain Temecula1 / ATCC 700964).